Here is a 126-residue protein sequence, read N- to C-terminus: Flagellar protein FliT (126 aa).

A required for homodimerization region spans residues 1-50 (MASPHRLLKDYQQLLSLSQKILHLAVNGQWDTLVEQEIVYVQSVEGLVNT). Positions 60 to 98 (MRLHLRQILQEVMDNEAKVKQLLQKRMDELSSLMGQSLK) are fliD binding.

This sequence belongs to the FliT family. In terms of assembly, homodimer. Interacts with FliD and FlhC.

The protein resides in the cytoplasm. It is found in the cytosol. Dual-function protein that regulates the transcription of class 2 flagellar operons and that also acts as an export chaperone for the filament-capping protein FliD. As a transcriptional regulator, acts as an anti-FlhDC factor; it directly binds FlhC, thus inhibiting the binding of the FlhC/FlhD complex to class 2 promoters, resulting in decreased expression of class 2 flagellar operons. As a chaperone, effects FliD transition to the membrane by preventing its premature polymerization, and by directing it to the export apparatus. In Pectobacterium carotovorum subsp. carotovorum (strain PC1), this protein is Flagellar protein FliT.